The primary structure comprises 1339 residues: Tuberous sclerosis 2 protein homolog (1339 aa).

Serine 1036 bears the Phosphoserine mark. Positions isoleucine 1109–leucine 1303 constitute a Rap-GAP domain.

In terms of assembly, interacts with tsc1.

It is found in the cytoplasm. The protein resides in the nucleus. Its function is as follows. Together with tsc1, required for uptake of various amino acids from the environment and for proper conjugation. Involved in induction of gene expression of permeases and genes required for meiosis upon nitrogen starvation. May act as a GTPase-activating protein (GAP) for the small GTPase rhb1. This Schizosaccharomyces pombe (strain 972 / ATCC 24843) (Fission yeast) protein is Tuberous sclerosis 2 protein homolog (tsc2).